The chain runs to 98 residues: Co-chaperonin GroES (98 aa).

Belongs to the GroES chaperonin family. In terms of assembly, heptamer of 7 subunits arranged in a ring. Interacts with the chaperonin GroEL.

Its subcellular location is the cytoplasm. In terms of biological role, together with the chaperonin GroEL, plays an essential role in assisting protein folding. The GroEL-GroES system forms a nano-cage that allows encapsulation of the non-native substrate proteins and provides a physical environment optimized to promote and accelerate protein folding. GroES binds to the apical surface of the GroEL ring, thereby capping the opening of the GroEL channel. The chain is Co-chaperonin GroES from Allorhizobium ampelinum (strain ATCC BAA-846 / DSM 112012 / S4) (Agrobacterium vitis (strain S4)).